The primary structure comprises 573 residues: Formate--tetrahydrofolate ligase 3 (573 aa).

66-73 (TPLGEGKT) provides a ligand contact to ATP.

The protein belongs to the formate--tetrahydrofolate ligase family.

It carries out the reaction (6S)-5,6,7,8-tetrahydrofolate + formate + ATP = (6R)-10-formyltetrahydrofolate + ADP + phosphate. The protein operates within one-carbon metabolism; tetrahydrofolate interconversion. This Rubrobacter xylanophilus (strain DSM 9941 / JCM 11954 / NBRC 16129 / PRD-1) protein is Formate--tetrahydrofolate ligase 3.